Consider the following 117-residue polypeptide: Large ribosomal subunit protein bL20c (117 aa).

This sequence belongs to the bacterial ribosomal protein bL20 family.

The protein localises to the plastid. Its subcellular location is the chloroplast. Binds directly to 23S ribosomal RNA and is necessary for the in vitro assembly process of the 50S ribosomal subunit. It is not involved in the protein synthesizing functions of that subunit. This is Large ribosomal subunit protein bL20c from Acorus gramineus (Dwarf sweet flag).